A 659-amino-acid polypeptide reads, in one-letter code: DNA mismatch repair protein MutL (659 aa).

Residues 338–459 are disordered; it reads GAPRGASKPG…DTTSERDSLP (122 aa). Residues 352-362 show a composition bias toward basic and acidic residues; the sequence is SPEHSPTDRDA. Residues 374–391 show a composition bias toward polar residues; that stretch reads SDGNGQRTAASGATSESP.

It belongs to the DNA mismatch repair MutL/HexB family.

Its function is as follows. This protein is involved in the repair of mismatches in DNA. It is required for dam-dependent methyl-directed DNA mismatch repair. May act as a 'molecular matchmaker', a protein that promotes the formation of a stable complex between two or more DNA-binding proteins in an ATP-dependent manner without itself being part of a final effector complex. The protein is DNA mismatch repair protein MutL of Halobacterium salinarum (strain ATCC 29341 / DSM 671 / R1).